The chain runs to 460 residues: 3-isopropylmalate dehydratase large subunit (460 aa).

Cys-341, Cys-401, and Cys-404 together coordinate [4Fe-4S] cluster.

The protein belongs to the aconitase/IPM isomerase family. LeuC type 1 subfamily. As to quaternary structure, heterodimer of LeuC and LeuD. The cofactor is [4Fe-4S] cluster.

It catalyses the reaction (2R,3S)-3-isopropylmalate = (2S)-2-isopropylmalate. Its pathway is amino-acid biosynthesis; L-leucine biosynthesis; L-leucine from 3-methyl-2-oxobutanoate: step 2/4. Catalyzes the isomerization between 2-isopropylmalate and 3-isopropylmalate, via the formation of 2-isopropylmaleate. In Phocaeicola vulgatus (strain ATCC 8482 / DSM 1447 / JCM 5826 / CCUG 4940 / NBRC 14291 / NCTC 11154) (Bacteroides vulgatus), this protein is 3-isopropylmalate dehydratase large subunit.